The following is a 124-amino-acid chain: Small ribosomal subunit protein bS6 (124 aa).

Residues 96 to 124 (ETAPSPMMKEVQREEARKAAQTTTEGQAA) are disordered. The segment covering 115 to 124 (AQTTTEGQAA) has biased composition (polar residues).

This sequence belongs to the bacterial ribosomal protein bS6 family.

Binds together with bS18 to 16S ribosomal RNA. This chain is Small ribosomal subunit protein bS6, found in Cupriavidus pinatubonensis (strain JMP 134 / LMG 1197) (Cupriavidus necator (strain JMP 134)).